The following is a 529-amino-acid chain: Basal body-orientation factor 1 (529 aa).

The span at 1–13 (MPSKGKDKKKGKS) shows a compositional bias: basic residues. The disordered stretch occupies residues 1–22 (MPSKGKDKKKGKSKGKDTKKLI). 2 coiled-coil regions span residues 85 to 201 (LKKQ…EAEK) and 271 to 361 (VKEK…EVER).

It belongs to the BBOF1 family. In terms of assembly, interacts with MNS1 and ODF2.

The protein localises to the cytoplasm. Its subcellular location is the cytoskeleton. The protein resides in the cilium basal body. It is found in the flagellum axoneme. Functionally, plays an essential role in sperm motility and male fertility by stabilizing the sperm flagellar axonemal structure. May be required for the stability of ODF2 and MANS1 proteins. Dispensable for the assembly and function of motile cilia. The polypeptide is Basal body-orientation factor 1 (Homo sapiens (Human)).